The chain runs to 147 residues: Hemoglobin subunit beta-1/2 (147 aa).

Position 2 is an N-acetylvaline (Val2). Positions 3–147 constitute a Globin domain; it reads HLSSEEKSAV…VANALAHKYH (145 aa). The residue at position 13 (Thr13) is a Phosphothreonine. Ser45 is subject to Phosphoserine. N6-acetyllysine is present on Lys60. His64 serves as a coordination point for heme b. Lys83 bears the N6-acetyllysine mark. His93 lines the heme b pocket. An S-nitrosocysteine modification is found at Cys94. Lys145 carries the N6-acetyllysine modification.

Belongs to the globin family. Heterotetramer of two alpha chains and two beta chains. In terms of tissue distribution, red blood cells.

Its function is as follows. Involved in oxygen transport from the lung to the various peripheral tissues. This is Hemoglobin subunit beta-1/2 (HBB1) from Oryctolagus cuniculus (Rabbit).